The chain runs to 330 residues: 4-hydroxythreonine-4-phosphate dehydrogenase (330 aa).

H133 and T134 together coordinate substrate. The a divalent metal cation site is built by H163, H208, and H263. Substrate is bound by residues K271, N280, and R289.

The protein belongs to the PdxA family. As to quaternary structure, homodimer. Requires Zn(2+) as cofactor. The cofactor is Mg(2+). It depends on Co(2+) as a cofactor.

It localises to the cytoplasm. The catalysed reaction is 4-(phosphooxy)-L-threonine + NAD(+) = 3-amino-2-oxopropyl phosphate + CO2 + NADH. The protein operates within cofactor biosynthesis; pyridoxine 5'-phosphate biosynthesis; pyridoxine 5'-phosphate from D-erythrose 4-phosphate: step 4/5. Its function is as follows. Catalyzes the NAD(P)-dependent oxidation of 4-(phosphooxy)-L-threonine (HTP) into 2-amino-3-oxo-4-(phosphooxy)butyric acid which spontaneously decarboxylates to form 3-amino-2-oxopropyl phosphate (AHAP). The protein is 4-hydroxythreonine-4-phosphate dehydrogenase of Azoarcus sp. (strain BH72).